Here is a 535-residue protein sequence, read N- to C-terminus: MRLAFWLYEGTALHGISRITNSMKGVHTVYHAPQGDDYITATYTMLERTPDFPGLSISVVRGRDLAQGVSRLPSTLQQVDHHYSPDLTVIAPSCSTALLQEDLNQLAAHSGVPSEKLLVYALNPFRVSENEAADGLFTELVKRYAVAQEKTPTPSVNLLGFTSLGFHLRANLTSLRRMLEALGIAVNVVAPWGSGIDDLAKLPAAWLNIAPYREIGATAAAYLDETCGMPAMYEAPIGVEPTTAWLRKLLDEINRIAGQKGLSRLAMPAPRAFSLDGLSAPSGVPWFARTADMESFSNKRAFVFGDATHTVALVKFLRDELGMQIIGAGTYLERHADWVRKELDGYLPGELMVTDRFQDVAKFIDDQMPDLVCGTQMERHSCRKLDVPCMVICPPTHIENHLLGYYPFFGFDGADVIADRVYLSCKLGLEKHLIDFFGDAGLEYEESDDAAKAEPDQPVSNAHGHTESKTVSQGEPIASDEGGISWSDEAETMLKKVPFFVRKKVRKNTEDFALGIGESCVTAEVFRKAKESLGG.

A [4Fe-4S] cluster-binding site is contributed by Asp36. Asp292 functions as the Proton donor in the catalytic mechanism. Residue 428–429 (GL) participates in substrate binding. Residues 447-483 (SDDAAKAEPDQPVSNAHGHTESKTVSQGEPIASDEGG) form a disordered region.

It belongs to the ChlB/BchB/BchZ family. In terms of assembly, protochlorophyllide reductase is composed of three subunits; BchL, BchN and BchB. Forms a heterotetramer of two BchB and two BchN subunits. The cofactor is [4Fe-4S] cluster.

The enzyme catalyses chlorophyllide a + oxidized 2[4Fe-4S]-[ferredoxin] + 2 ADP + 2 phosphate = protochlorophyllide a + reduced 2[4Fe-4S]-[ferredoxin] + 2 ATP + 2 H2O. It functions in the pathway porphyrin-containing compound metabolism; bacteriochlorophyll biosynthesis (light-independent). In terms of biological role, component of the dark-operative protochlorophyllide reductase (DPOR) that uses Mg-ATP and reduced ferredoxin to reduce ring D of protochlorophyllide (Pchlide) to form chlorophyllide a (Chlide). This reaction is light-independent. The NB-protein (BchN-BchB) is the catalytic component of the complex. This is Light-independent protochlorophyllide reductase subunit B from Chlorobium phaeobacteroides (strain DSM 266 / SMG 266 / 2430).